Here is a 267-residue protein sequence, read N- to C-terminus: Large ribosomal subunit protein mL57 (267 aa).

The segment covering 43–54 (SSSAVQQEQDAS) has biased composition (low complexity). Residues 43–73 (SSSAVQQEQDASGTSSSQQPRPRWSYTPERM) are disordered.

The protein belongs to the ribonuclease III family. Mitochondrion-specific ribosomal protein mL57 subfamily. In terms of assembly, component of the mitochondrial large ribosomal subunit (mt-LSU). Mature N.crassa 74S mitochondrial ribosomes consist of a small (37S) and a large (54S) subunit. The 37S small subunit contains a 16S ribosomal RNA (16S mt-rRNA) and 32 different proteins. The 54S large subunit contains a 23S rRNA (23S mt-rRNA) and 42 different proteins. mL57 forms a heterodimer with mL44 and stabilizes rRNA expansion segments 1/2 at a membrane-facing protuberance close to the point of attachment of the ribosome to the translocon in the membrane.

Its subcellular location is the mitochondrion. Component of the mitochondrial ribosome (mitoribosome), a dedicated translation machinery responsible for the synthesis of mitochondrial genome-encoded proteins, including at least some of the essential transmembrane subunits of the mitochondrial respiratory chain. The mitoribosomes are attached to the mitochondrial inner membrane and translation products are cotranslationally integrated into the membrane. The protein is Large ribosomal subunit protein mL57 (mrpl15) of Neurospora crassa (strain ATCC 24698 / 74-OR23-1A / CBS 708.71 / DSM 1257 / FGSC 987).